Reading from the N-terminus, the 657-residue chain is Probable potassium transport system protein Kup (657 aa).

The next 12 helical transmembrane spans lie at 15 to 35 (SFLIALGVVYGDIGTSPLYVM), 48 to 68 (ITPDFILGVLSLIFWTMTLLT), 100 to 120 (WLIIPAMVGGSALLADGMLTP), 147 to 167 (IIIIIVLVILSFLFFIQHFGT), 173 to 193 (IFGPVMFIWFAFLAILGIVNL), 219 to 239 (LGFFILGGVFLSTTGAEALYS), 251 to 271 (LTWPLVKICLLLNYFGQAAWI), 292 to 312 (MMPSWLLLFGVLISTLAAIIA), 348 to 368 (IYMPAINRILWIACIAIVLYF), 378 to 398 (YGLSITVTMLMTSILLFNYLL), 403 to 423 (PLPIALIILVFFSSLEFSFLI), and 431 to 451 (KGGFVSVLIALCILSIMYIWI).

This sequence belongs to the HAK/KUP transporter (TC 2.A.72) family.

The protein resides in the cell membrane. The enzyme catalyses K(+)(in) + H(+)(in) = K(+)(out) + H(+)(out). Functionally, transport of potassium into the cell. Likely operates as a K(+):H(+) symporter. The sequence is that of Probable potassium transport system protein Kup from Clostridium perfringens (strain SM101 / Type A).